The sequence spans 488 residues: Coiled-coil domain-containing protein 77 (488 aa).

The segment at 21 to 48 (GVAVSGPTKRRGMADSLESTPLPSPEDR) is disordered. S36 carries the phosphoserine modification. Residue K51 forms a Glycyl lysine isopeptide (Lys-Gly) (interchain with G-Cter in SUMO2) linkage. Coiled-coil stretches lie at residues 55-118 (SKEL…QVCL) and 208-488 (KESS…LRLC). The segment at 192 to 213 (FKADPKISKRRPSRERKESSEH) is disordered.

The protein is Coiled-coil domain-containing protein 77 (CCDC77) of Homo sapiens (Human).